The chain runs to 608 residues: UvrABC system protein C (608 aa).

The 79-residue stretch at 15-93 folds into the GIY-YIG domain; sequence HQPGVYRMYN…IKQYLPKYNV (79 aa). The 36-residue stretch at 203–238 folds into the UVR domain; that stretch reads RQVIQTLVKQMESASQSLNFEKAAIIRDQIQAMRRV.

Belongs to the UvrC family. As to quaternary structure, interacts with UvrB in an incision complex.

It localises to the cytoplasm. The UvrABC repair system catalyzes the recognition and processing of DNA lesions. UvrC both incises the 5' and 3' sides of the lesion. The N-terminal half is responsible for the 3' incision and the C-terminal half is responsible for the 5' incision. The protein is UvrABC system protein C of Aliivibrio fischeri (strain ATCC 700601 / ES114) (Vibrio fischeri).